The primary structure comprises 232 residues: Purine nucleoside phosphorylase DeoD-type (232 aa).

His-4 is a binding site for a purine D-ribonucleoside. Residues Gly-20, Arg-24, Arg-43, and 87–90 (RIGT) contribute to the phosphate site. A purine D-ribonucleoside-binding positions include 179-181 (EME) and 203-204 (SD). Catalysis depends on Asp-204, which acts as the Proton donor.

It belongs to the PNP/UDP phosphorylase family. Homohexamer; trimer of homodimers.

It catalyses the reaction a purine D-ribonucleoside + phosphate = a purine nucleobase + alpha-D-ribose 1-phosphate. It carries out the reaction a purine 2'-deoxy-D-ribonucleoside + phosphate = a purine nucleobase + 2-deoxy-alpha-D-ribose 1-phosphate. Catalyzes the reversible phosphorolytic breakdown of the N-glycosidic bond in the beta-(deoxy)ribonucleoside molecules, with the formation of the corresponding free purine bases and pentose-1-phosphate. The sequence is that of Purine nucleoside phosphorylase DeoD-type from Caldanaerobacter subterraneus subsp. tengcongensis (strain DSM 15242 / JCM 11007 / NBRC 100824 / MB4) (Thermoanaerobacter tengcongensis).